The following is a 446-amino-acid chain: N-succinylarginine dihydrolase (446 aa).

Substrate is bound by residues 19 to 28, Asn110, and 137 to 138; these read AGLSFGNEAS and HR. The active site involves Glu174. Arg213 provides a ligand contact to substrate. His249 is a catalytic residue. Positions 251 and 364 each coordinate substrate. The active-site Nucleophile is Cys370.

The protein belongs to the succinylarginine dihydrolase family. As to quaternary structure, homodimer.

It catalyses the reaction N(2)-succinyl-L-arginine + 2 H2O + 2 H(+) = N(2)-succinyl-L-ornithine + 2 NH4(+) + CO2. The protein operates within amino-acid degradation; L-arginine degradation via AST pathway; L-glutamate and succinate from L-arginine: step 2/5. In terms of biological role, catalyzes the hydrolysis of N(2)-succinylarginine into N(2)-succinylornithine, ammonia and CO(2). The polypeptide is N-succinylarginine dihydrolase (Serratia proteamaculans (strain 568)).